The sequence spans 601 residues: Deuterosome assembly protein 1 (601 aa).

Coiled coils occupy residues 14-59 (CEAE…NAQT), 86-196 (TQNY…GKKQ), and 226-277 (IEKL…ELQS). The interval 305–329 (AQDNRKRVESSYSPSPKEAERKRKE) is disordered. Residues 354 to 397 (EEGLCSEQERLRSEISELTQELHQKEVTIATVMKKAALLERQLK) adopt a coiled-coil conformation. Position 544 is a phosphoserine (Ser544). Residues 555-586 (AAQHFLMEEERRAKELEKLLNTHIDELQRHTE) are a coiled coil.

It belongs to the CEP63 family. Interacts with CEP152; the interaction is mutually exclusive with CEP63. As to expression, highly enriched in multicilia-abundant tissues (trachea and oviduct).

The protein resides in the cytoplasm. Its function is as follows. Key structural component of the deuterosome, a structure that promotes de novo centriole amplification in multiciliated cells. Deuterosome-mediated centriole amplification occurs in terminally differentiated multiciliated cells and can generate more than 100 centrioles. Probably sufficient for the specification and formation of the deuterosome inner core. Interacts with CEP152 and recruits PLK4 to activate centriole biogenesis. The chain is Deuterosome assembly protein 1 from Mus musculus (Mouse).